The chain runs to 240 residues: UDP-2,3-diacylglucosamine hydrolase (240 aa).

Positions 8, 10, 41, 79, and 114 each coordinate Mn(2+). Residue 79–80 (NR) participates in substrate binding. Residues Asp122, Ser160, Asn164, Lys167, and His195 each coordinate substrate. Mn(2+) is bound by residues His195 and His197.

This sequence belongs to the LpxH family. Requires Mn(2+) as cofactor.

It is found in the cell inner membrane. It carries out the reaction UDP-2-N,3-O-bis[(3R)-3-hydroxytetradecanoyl]-alpha-D-glucosamine + H2O = 2-N,3-O-bis[(3R)-3-hydroxytetradecanoyl]-alpha-D-glucosaminyl 1-phosphate + UMP + 2 H(+). Its pathway is glycolipid biosynthesis; lipid IV(A) biosynthesis; lipid IV(A) from (3R)-3-hydroxytetradecanoyl-[acyl-carrier-protein] and UDP-N-acetyl-alpha-D-glucosamine: step 4/6. Functionally, hydrolyzes the pyrophosphate bond of UDP-2,3-diacylglucosamine to yield 2,3-diacylglucosamine 1-phosphate (lipid X) and UMP by catalyzing the attack of water at the alpha-P atom. Involved in the biosynthesis of lipid A, a phosphorylated glycolipid that anchors the lipopolysaccharide to the outer membrane of the cell. This is UDP-2,3-diacylglucosamine hydrolase from Pectobacterium atrosepticum (strain SCRI 1043 / ATCC BAA-672) (Erwinia carotovora subsp. atroseptica).